The primary structure comprises 501 residues: Phenylalanine--tRNA ligase alpha subunit (501 aa).

L-phenylalanine-binding positions include threonine 344, 383 to 385 (QID), and phenylalanine 424. Mg(2+) is bound at residue glutamate 426. L-phenylalanine is bound at residue phenylalanine 449.

It belongs to the class-II aminoacyl-tRNA synthetase family. Phe-tRNA synthetase alpha subunit type 2 subfamily. As to quaternary structure, tetramer of two alpha and two beta subunits. Mg(2+) serves as cofactor.

It is found in the cytoplasm. The catalysed reaction is tRNA(Phe) + L-phenylalanine + ATP = L-phenylalanyl-tRNA(Phe) + AMP + diphosphate + H(+). This chain is Phenylalanine--tRNA ligase alpha subunit, found in Thermococcus kodakarensis (strain ATCC BAA-918 / JCM 12380 / KOD1) (Pyrococcus kodakaraensis (strain KOD1)).